A 117-amino-acid polypeptide reads, in one-letter code: uncharacterized protein (117 aa).

An N-terminal signal peptide occupies residues 1 to 24 (MMTEFGSAMTLVTGLVAYGAYVKS). Residues 42-117 (EKENFNYNNN…NNQIKRRLFD (76 aa)) are disordered. Residues 46 to 95 (FNYNNNNNNNNNNNNNNSNNNDNNNNNNSNSNNNNNNNNNNNNNNNNNIN) are compositionally biased toward low complexity. 2 N-linked (GlcNAc...) asparagine glycosylation sites follow: Asn-61 and Asn-72. The segment covering 96 to 110 (DKQINGTNIFDSNNQ) has biased composition (polar residues).

It localises to the secreted. This is an uncharacterized protein from Dictyostelium discoideum (Social amoeba).